Here is a 231-residue protein sequence, read N- to C-terminus: Augmin complex subunit dgt2 (231 aa).

The stretch at 128–199 (QEADLSCDQK…VQTKAELLRG (72 aa)) forms a coiled coil.

As to quaternary structure, component of the augmin complex composed of dgt2, dgt3, dgt4, dgt5, dgt6, msd1, msd5 and wac. The complex interacts directly or indirectly with microtubules and is required for centrosome-independent generation of spindle microtubules. dgt2 interacts directly with wac (via coiled coil). As to expression, in adult females, detected only in the abdomen with no expression in the head or thorax (at protein level).

It localises to the cytoplasm. It is found in the cytoskeleton. The protein resides in the spindle. Its subcellular location is the spindle pole. As part of the augmin complex, plays a role in centrosome-independent generation of spindle microtubules. The complex is required for mitotic spindle assembly through its involvement in localizing gamma-tubulin to spindle microtubules. dgt2 binds to microtubules in vitro. The protein is Augmin complex subunit dgt2 of Drosophila melanogaster (Fruit fly).